Consider the following 255-residue polypeptide: Pimeloyl-[acyl-carrier protein] methyl ester esterase (255 aa).

Residues 16–242 (LVLLHGWGMN…SSHAPFITEP (227 aa)) enclose the AB hydrolase-1 domain. Residues tryptophan 22, 82-83 (SL), and 143-147 (FMALQ) each bind substrate. Serine 82 acts as the Nucleophile in catalysis. Catalysis depends on residues aspartate 207 and histidine 235. Histidine 235 serves as a coordination point for substrate.

Belongs to the AB hydrolase superfamily. Carboxylesterase BioH family. Monomer.

It is found in the cytoplasm. The catalysed reaction is 6-carboxyhexanoyl-[ACP] methyl ester + H2O = 6-carboxyhexanoyl-[ACP] + methanol + H(+). Its pathway is cofactor biosynthesis; biotin biosynthesis. The physiological role of BioH is to remove the methyl group introduced by BioC when the pimeloyl moiety is complete. It allows to synthesize pimeloyl-ACP via the fatty acid synthetic pathway through the hydrolysis of the ester bonds of pimeloyl-ACP esters. The protein is Pimeloyl-[acyl-carrier protein] methyl ester esterase of Vibrio vulnificus (strain CMCP6).